Consider the following 49-residue polypeptide: Multidrug efflux pump accessory protein AcrZ (49 aa).

At 1–7 (MLELLKS) the chain is on the periplasmic side. The chain crosses the membrane as a helical span at residues 8–28 (LVFAVIMVPVVMAIILGLIYG). Over 29-49 (LGEVFNIFSGVGKKDQPGQNH) the chain is Cytoplasmic.

This sequence belongs to the AcrZ family. In terms of assembly, part of the AcrA-AcrB-AcrZ-TolC efflux pump, interacts directly with AcrB.

The protein localises to the cell inner membrane. AcrA-AcrB-AcrZ-TolC is a drug efflux protein complex with a broad substrate specificity. This protein binds to AcrB and is required for efflux of some but not all substrates, suggesting it may influence the specificity of drug export. This is Multidrug efflux pump accessory protein AcrZ from Escherichia coli O157:H7.